Here is a 480-residue protein sequence, read N- to C-terminus: Aspartyl/glutamyl-tRNA(Asn/Gln) amidotransferase subunit B (480 aa).

Belongs to the GatB/GatE family. GatB subfamily. As to quaternary structure, heterotrimer of A, B and C subunits.

It carries out the reaction L-glutamyl-tRNA(Gln) + L-glutamine + ATP + H2O = L-glutaminyl-tRNA(Gln) + L-glutamate + ADP + phosphate + H(+). It catalyses the reaction L-aspartyl-tRNA(Asn) + L-glutamine + ATP + H2O = L-asparaginyl-tRNA(Asn) + L-glutamate + ADP + phosphate + 2 H(+). In terms of biological role, allows the formation of correctly charged Asn-tRNA(Asn) or Gln-tRNA(Gln) through the transamidation of misacylated Asp-tRNA(Asn) or Glu-tRNA(Gln) in organisms which lack either or both of asparaginyl-tRNA or glutaminyl-tRNA synthetases. The reaction takes place in the presence of glutamine and ATP through an activated phospho-Asp-tRNA(Asn) or phospho-Glu-tRNA(Gln). The protein is Aspartyl/glutamyl-tRNA(Asn/Gln) amidotransferase subunit B of Caldicellulosiruptor bescii (strain ATCC BAA-1888 / DSM 6725 / KCTC 15123 / Z-1320) (Anaerocellum thermophilum).